A 104-amino-acid chain; its full sequence is Pterin-4-alpha-carbinolamine dehydratase (104 aa).

Ala-2 is modified (N-acetylalanine). Substrate is bound by residues 61-63 (DHH) and 78-81 (STHD).

This sequence belongs to the pterin-4-alpha-carbinolamine dehydratase family. In terms of assembly, homotetramer and homodimer.

The protein resides in the cytoplasm. Its subcellular location is the nucleus. It carries out the reaction (4aS,6R)-4a-hydroxy-L-erythro-5,6,7,8-tetrahydrobiopterin = (6R)-L-erythro-6,7-dihydrobiopterin + H2O. Functionally, involved in tetrahydrobiopterin biosynthesis. Seems to both prevent the formation of 7-pterins and accelerate the formation of quinonoid-BH2. Coactivator for HNF1A-dependent transcription. Regulates the dimerization of homeodomain protein HNF1A and enhances its transcriptional activity. Also acts as a coactivator for HNF1B-dependent transcription. The sequence is that of Pterin-4-alpha-carbinolamine dehydratase (pcbd) from Xenopus laevis (African clawed frog).